The following is a 300-amino-acid chain: Acetyl-coenzyme A carboxylase carboxyl transferase subunit beta 1 (300 aa).

The CoA carboxyltransferase N-terminal domain maps to Met-26–Ala-294. The Zn(2+) site is built by Cys-30, Cys-33, Cys-49, and Cys-51. A C4-type zinc finger spans residues Cys-30 to Cys-51.

This sequence belongs to the AccD/PCCB family. In terms of assembly, acetyl-CoA carboxylase is a heterohexamer composed of biotin carboxyl carrier protein (AccB), biotin carboxylase (AccC) and two subunits each of ACCase subunit alpha (AccA) and ACCase subunit beta (AccD). Zn(2+) serves as cofactor.

It is found in the cytoplasm. The enzyme catalyses N(6)-carboxybiotinyl-L-lysyl-[protein] + acetyl-CoA = N(6)-biotinyl-L-lysyl-[protein] + malonyl-CoA. The protein operates within lipid metabolism; malonyl-CoA biosynthesis; malonyl-CoA from acetyl-CoA: step 1/1. In terms of biological role, component of the acetyl coenzyme A carboxylase (ACC) complex. Biotin carboxylase (BC) catalyzes the carboxylation of biotin on its carrier protein (BCCP) and then the CO(2) group is transferred by the transcarboxylase to acetyl-CoA to form malonyl-CoA. This is Acetyl-coenzyme A carboxylase carboxyl transferase subunit beta 1 from Roseiflexus sp. (strain RS-1).